The following is a 156-amino-acid chain: Small ribosomal subunit protein uS7 (156 aa).

It belongs to the universal ribosomal protein uS7 family. As to quaternary structure, part of the 30S ribosomal subunit. Contacts proteins S9 and S11.

Its function is as follows. One of the primary rRNA binding proteins, it binds directly to 16S rRNA where it nucleates assembly of the head domain of the 30S subunit. Is located at the subunit interface close to the decoding center, probably blocks exit of the E-site tRNA. In Staphylococcus aureus (strain USA300), this protein is Small ribosomal subunit protein uS7.